Consider the following 643-residue polypeptide: Chromosomal replication initiator protein DnaA (643 aa).

The tract at residues 1-97 (MADVPADLAA…VDDSAGEPPP (97 aa)) is domain I, interacts with DnaA modulators. The tract at residues 87-303 (TVDDSAGEPP…ASGPGEPTAR (217 aa)) is disordered. The domain II stretch occupies residues 97–302 (PAAPPAQQTP…PASGPGEPTA (206 aa)). Polar residues predominate over residues 195–209 (SPSSQDAYGSPSQDY). Residues 222-269 (QRGDYDTPRAEYEPARPDYDSARPDYESARPEYDQRDPVRRELPEPPA) show a composition bias toward basic and acidic residues. Residues 291 to 300 (PAPASGPGEP) are compositionally biased toward low complexity. The tract at residues 303–519 (RLNPKYLFDT…GALIRVTAFA (217 aa)) is domain III, AAA+ region. Residues glycine 347, glycine 349, lysine 350, and threonine 351 each contribute to the ATP site. A domain IV, binds dsDNA region spans residues 520 to 643 (SLNRQPVDLG…TELTNRIKNG (124 aa)).

It belongs to the DnaA family. As to quaternary structure, oligomerizes as a right-handed, spiral filament on DNA at oriC.

It is found in the cytoplasm. Functionally, plays an essential role in the initiation and regulation of chromosomal replication. ATP-DnaA binds to the origin of replication (oriC) to initiate formation of the DNA replication initiation complex once per cell cycle. Binds the DnaA box (a 9 base pair repeat at the origin) and separates the double-stranded (ds)DNA. Forms a right-handed helical filament on oriC DNA; dsDNA binds to the exterior of the filament while single-stranded (ss)DNA is stabiized in the filament's interior. The ATP-DnaA-oriC complex binds and stabilizes one strand of the AT-rich DNA unwinding element (DUE), permitting loading of DNA polymerase. After initiation quickly degrades to an ADP-DnaA complex that is not apt for DNA replication. Binds acidic phospholipids. The polypeptide is Chromosomal replication initiator protein DnaA (Streptomyces reticuli).